A 219-amino-acid chain; its full sequence is Adenylate kinase (219 aa).

An ATP-binding site is contributed by 12–17; that stretch reads GAGKGT. The segment at 32–61 is NMP; sequence STGDMLRAAVKAGTPIGLQAKAVMDAGELV. AMP contacts are provided by residues Thr-33, Arg-38, 59 to 61, 87 to 90, and Gln-94; these read ELV and GYPR. Residues 128–165 form an LID region; it reads GRFSCARCGEGYHDRYKLPKVADICDVCGSKEFKRRPD. Arg-129 serves as a coordination point for ATP. Positions 132, 135, 152, and 155 each coordinate Zn(2+). AMP contacts are provided by Arg-162 and Arg-174. Residue Ala-202 participates in ATP binding.

This sequence belongs to the adenylate kinase family. Monomer.

The protein resides in the cytoplasm. The enzyme catalyses AMP + ATP = 2 ADP. The protein operates within purine metabolism; AMP biosynthesis via salvage pathway; AMP from ADP: step 1/1. In terms of biological role, catalyzes the reversible transfer of the terminal phosphate group between ATP and AMP. Plays an important role in cellular energy homeostasis and in adenine nucleotide metabolism. The chain is Adenylate kinase from Sphingopyxis alaskensis (strain DSM 13593 / LMG 18877 / RB2256) (Sphingomonas alaskensis).